The sequence spans 111 residues: Ribonuclease P protein component (111 aa).

The protein belongs to the RnpA family. As to quaternary structure, consists of a catalytic RNA component (M1 or rnpB) and a protein subunit.

It carries out the reaction Endonucleolytic cleavage of RNA, removing 5'-extranucleotides from tRNA precursor.. Its function is as follows. RNaseP catalyzes the removal of the 5'-leader sequence from pre-tRNA to produce the mature 5'-terminus. It can also cleave other RNA substrates such as 4.5S RNA. The protein component plays an auxiliary but essential role in vivo by binding to the 5'-leader sequence and broadening the substrate specificity of the ribozyme. The polypeptide is Ribonuclease P protein component (Mycoplasmopsis pulmonis (strain UAB CTIP) (Mycoplasma pulmonis)).